Consider the following 886-residue polypeptide: MSIKASGGSPLARPQLYRTASILTITQAEQQDRFLQLGELNQLVSFLNSGQKRLEVADILTKNANILVARAADKIFVGGSAISYLERPQAAVIIAGDQSSRDKINELSGNIQGDFGQSFRSLFNAGGATPPGFKPINVLRYGTTRMRKSLRDLDWFLRYLTYAIVSGDPNILSVNIRGLRELIDNACSSAAAIVALREMRRTALAIFEEDIKGQDLVREYFNVVISEFEAPSLTDKLRKRESTDLQGLRLPQTYSQAGVSTPRFVMKSSLSADEKNTVVKACYRQIFERDIAKTYDLSLSNLESQVKNGQISIKEFIRSLGTSNIYRKQFYEPFVNSRALELAFRHFLGRGPSSLEEFQKYFAILSATGLSGLVNAILNSAEYADYFGEETVPYFRKLGEEPQECRNWGPQIDLLNYSAPFRKVPQFITLFSDYKQSLPDQHPYGTGNDPLSIQFGAIFPKENKDPRKRQAIFGKDTRRILVRRGPGIYNQISNPQVRPKSAGSLGPKIFKLSNTLVATNSSANFENSVDVIAKVSYLRVFGREVYQEEKLLLRPIESQLQDGQISVREFIRQLAKSSIFRSLYWEPLYICKAIEYIHNRLLGRPTYGRQEINKYFDIAYKEGYYQVVDAIIDSPEYIETFGENVVPYERYTTPAGIALRSLRPGIIDQRFKKVISSKSSRFVELGKVKEIRSSNDIQSRIAQGVTALRDQSVIFDVNQNSSQEVLEQALRAAYRQIFERDLNSFSIGGEFLDIESSFLNKQINVKELIQKLALSELYGKEFYQPYPNTKVIELGTKHILGRAPNNQAEIRFLNQILASKGLSTFVETLVNSSEYDSVYGTNTVPYRRFPTLPAANFPNTETLYNRLTKQNVSVVVPSFKKVLGNQ.

Residue Cys-187 coordinates (2R,3E)-phycocyanobilin. 3 PBS-linker domains span residues 244–424, 496–678, and 695–876; these read DLQG…FRKV, QVRP…ISSK, and NDIQ…SVVV.

Belongs to the phycobilisome linker protein family. Post-translationally, contains one covalently linked bilin chromophore. This protein autochromophorylates (Potential).

The protein resides in the plastid. The protein localises to the chloroplast thylakoid membrane. This protein is postulated to act both as terminal energy acceptor and as a linker polypeptide that stabilizes the phycobilisome architecture. May have intrinsic bilin lyase activity. The chain is Phycobiliprotein ApcE (apcE) from Porphyra purpurea (Red seaweed).